We begin with the raw amino-acid sequence, 467 residues long: Inactive pancreatic lipase-related protein 1 (467 aa).

The signal sequence occupies residues 1–17 (MVSIWTIALFLLGAAKA). Disulfide bonds link Cys-21-Cys-27 and Cys-109-Cys-120. The N-linked (GlcNAc...) asparagine glycan is linked to Asn-157. The active-site Nucleophile is Ser-171. Catalysis depends on Asp-194, which acts as the Charge relay system. Glu-205, Arg-208, Asp-210, and Asp-213 together coordinate Ca(2+). An intrachain disulfide couples Cys-255 to Cys-279. His-281 functions as the Charge relay system in the catalytic mechanism. Cystine bridges form between Cys-303/Cys-314, Cys-317/Cys-322, and Cys-451/Cys-467. The PLAT domain maps to 356-467 (WRYGVSITLS…EDVLLTLTPC (112 aa)).

This sequence belongs to the AB hydrolase superfamily. Lipase family. As to expression, detected in pancreas (at protein level).

The protein localises to the secreted. May function as inhibitor of dietary triglyceride digestion. Lacks detectable lipase activity towards triglycerides, diglycerides, phosphatidylcholine, galactolipids or cholesterol esters (in vitro). This Canis lupus familiaris (Dog) protein is Inactive pancreatic lipase-related protein 1 (PNLIPRP1).